Consider the following 226-residue polypeptide: MFIKFEKVKKLLNMLQSMLEAGVHFGHQSRRWNPKMAPYIYEEKNGIHILDVVQTIGELEKARTAFKSAKNVIFVGTRPAIAPLIEQVATKTGSNYVNTRWVGGLLTNWTTMTMCLEKLGRLDAQLETATPKKGFTKKDILSLTRERERLEKFFGGLRNLKTLPDLVVIVGQPNERNAVLECQKLNIPTITLLDSNCDPTFVSYGIPANDDSARSVAFILDQLTKD.

Belongs to the universal ribosomal protein uS2 family.

The protein localises to the plastid. It localises to the chloroplast. This Ostreococcus tauri protein is Small ribosomal subunit protein uS2c (rps2).